The primary structure comprises 262 residues: Type III pantothenate kinase (262 aa).

5-12 is an ATP binding site; that stretch reads DAGNTRSK. Substrate is bound by residues Y102 and 110-113; that span reads GSDR. The Proton acceptor role is filled by D112. D132 provides a ligand contact to K(+). T135 is an ATP binding site. T190 lines the substrate pocket.

It belongs to the type III pantothenate kinase family. As to quaternary structure, homodimer. NH4(+) is required as a cofactor. The cofactor is K(+).

It localises to the cytoplasm. It carries out the reaction (R)-pantothenate + ATP = (R)-4'-phosphopantothenate + ADP + H(+). Its pathway is cofactor biosynthesis; coenzyme A biosynthesis; CoA from (R)-pantothenate: step 1/5. Functionally, catalyzes the phosphorylation of pantothenate (Pan), the first step in CoA biosynthesis. This chain is Type III pantothenate kinase, found in Idiomarina loihiensis (strain ATCC BAA-735 / DSM 15497 / L2-TR).